Reading from the N-terminus, the 444-residue chain is Na(+)/H(+) antiporter NhaA 2 (444 aa).

Transmembrane regions (helical) follow at residues 21 to 41, 64 to 84, 102 to 122, 131 to 151, 160 to 180, 185 to 205, 212 to 232, 307 to 327, 342 to 362, 377 to 397, and 413 to 433; these read FSGIFLFFCAVSAMIVANSPF, FSIHDWINDVLMSIFFLMVGL, AFPVIGAVGGMIVPGVIYYVL, GFGIPMATDIAFALGVILLLG, VFLVTLAVADDLGAIVVIAVF, EGLHFIYLGVAAGLLILLTGI, HLGVYIGIGILLWFCVHHSGI, ALQPLCAFIIMPLFAFANAGV, LGVILGLVVGKPLGILSLTFL, WSHIFGAGMLAGIGFTMSMFV, and IAILLASSIAGIVGSLYLIIN.

The protein belongs to the NhaA Na(+)/H(+) (TC 2.A.33) antiporter family.

The protein resides in the cell inner membrane. The catalysed reaction is Na(+)(in) + 2 H(+)(out) = Na(+)(out) + 2 H(+)(in). In terms of biological role, na(+)/H(+) antiporter that extrudes sodium in exchange for external protons. The protein is Na(+)/H(+) antiporter NhaA 2 of Helicobacter hepaticus (strain ATCC 51449 / 3B1).